The chain runs to 856 residues: DNA mismatch repair protein MutS (856 aa).

Glycine 611 to serine 618 provides a ligand contact to ATP.

Belongs to the DNA mismatch repair MutS family.

This protein is involved in the repair of mismatches in DNA. It is possible that it carries out the mismatch recognition step. This protein has a weak ATPase activity. The chain is DNA mismatch repair protein MutS from Histophilus somni (strain 129Pt) (Haemophilus somnus).